Here is a 378-residue protein sequence, read N- to C-terminus: DNA replication and repair protein RecF (378 aa).

30–37 (GRNGQGKT) is an ATP binding site.

Belongs to the RecF family.

The protein localises to the cytoplasm. The RecF protein is involved in DNA metabolism; it is required for DNA replication and normal SOS inducibility. RecF binds preferentially to single-stranded, linear DNA. It also seems to bind ATP. This is DNA replication and repair protein RecF from Frankia alni (strain DSM 45986 / CECT 9034 / ACN14a).